The following is a 124-amino-acid chain: Seripauperin-19 (124 aa).

The N-terminal stretch at 1 to 20 (MVKLTSIAAGVAAIAAGVAA) is a signal peptide.

Belongs to the SRP1/TIP1 family. Seripauperin subfamily.

The chain is Seripauperin-19 (PAU19) from Saccharomyces cerevisiae (strain ATCC 204508 / S288c) (Baker's yeast).